Consider the following 508-residue polypeptide: MEEFKRYLELDRSQQHDFVYPLIFQEYIYALAHDHGLNRSILLENIGYDNKSSLLIVKRLITHLITQMYQQNHFLFSANDSNQNPFLGHNTNLYFQMILEGFAVVVEIPFSLRLRFSLEGKEIVKSQNLRSIHSIFPFLEDKFSHLNYVLDILIPHSIHLEILVQTLRYWVKDASSLYLLRFFLHEYRNWNSLITPKKSSFSFSKRNQRLFLFLYNFHICEYESIFVFLRNQSSHLRSISSGTFLERRYFYEKIEHFVEVFTKDFQAILWFFKDPFIHYVRYQGKSILASKGTSLLMNKWRYYLVNFWQCYFYIWSQPGRIHINQLSKHSLDFLGYLSSVRLNPSMVRSQMLENSFLIGNAIKKFDTIVPIIPMIGSLSKAKFCNVLGHPISKPVWADLSDSDIIDRFGRIYRNLSHYHSGSSKKTSLYRIKYILRLSCARTLARKHKSTVRAFLKRLGSELLEEFFTGEEQVFSLTFPKASSTSRGLYRRRIWYLDIICINDLANHE.

The protein belongs to the intron maturase 2 family. MatK subfamily.

It localises to the plastid. The protein localises to the chloroplast. In terms of biological role, usually encoded in the trnK tRNA gene intron. Probably assists in splicing its own and other chloroplast group II introns. This chain is Maturase K, found in Stewartia pseudocamellia (Japanese stewartia).